The chain runs to 311 residues: Bifunctional protein FolD (311 aa).

174–176 provides a ligand contact to NADP(+); the sequence is GKG.

It belongs to the tetrahydrofolate dehydrogenase/cyclohydrolase family. As to quaternary structure, homodimer.

The enzyme catalyses (6R)-5,10-methylene-5,6,7,8-tetrahydrofolate + NADP(+) = (6R)-5,10-methenyltetrahydrofolate + NADPH. It catalyses the reaction (6R)-5,10-methenyltetrahydrofolate + H2O = (6R)-10-formyltetrahydrofolate + H(+). The protein operates within one-carbon metabolism; tetrahydrofolate interconversion. Functionally, catalyzes the oxidation of 5,10-methylenetetrahydrofolate to 5,10-methenyltetrahydrofolate and then the hydrolysis of 5,10-methenyltetrahydrofolate to 10-formyltetrahydrofolate. In Pyrobaculum arsenaticum (strain DSM 13514 / JCM 11321 / PZ6), this protein is Bifunctional protein FolD.